The chain runs to 419 residues: Putative zinc metalloprotease SP_0263 (419 aa).

Residue H18 coordinates Zn(2+). E19 is a catalytic residue. Position 22 (H22) interacts with Zn(2+). 3 helical membrane-spanning segments follow: residues 169-191 (LITN…WVLI), 345-367 (ILYF…IPAL), and 388-410 (EIET…AVTW).

It belongs to the peptidase M50B family. Zn(2+) is required as a cofactor.

Its subcellular location is the cell membrane. The chain is Putative zinc metalloprotease SP_0263 from Streptococcus pneumoniae serotype 4 (strain ATCC BAA-334 / TIGR4).